We begin with the raw amino-acid sequence, 21 residues long: Cytoplasmic filament protein A (21 aa).

The tract at residues A1 to G21 is disordered.

It is found in the cytoplasm. Its function is as follows. Component of the cytoplasmic filaments that run the length of the organism just underneath the cytoplasmic membrane. The sequence is that of Cytoplasmic filament protein A (cfpA) from Treponema phagedenis.